Here is an 850-residue protein sequence, read N- to C-terminus: DNA mismatch repair protein MutS (850 aa).

ATP is bound at residue glycine 608–serine 615.

Belongs to the DNA mismatch repair MutS family.

Functionally, this protein is involved in the repair of mismatches in DNA. It is possible that it carries out the mismatch recognition step. This protein has a weak ATPase activity. This Thiobacillus denitrificans (strain ATCC 25259 / T1) protein is DNA mismatch repair protein MutS.